The following is a 160-amino-acid chain: Glyoxalase domain-containing protein 5 (160 aa).

The VOC domain occupies 37 to 157 (RLDHIVMTVK…DRNLIEVSNY (121 aa)).

Belongs to the glyoxalase I family.

The polypeptide is Glyoxalase domain-containing protein 5 (GLOD5) (Homo sapiens (Human)).